Consider the following 908-residue polypeptide: MFGKLLTKVFGSRNDRTLKGLQKVVNKINALEADYEKLTDEQLKAKTAEFRERLAAGASLESIMAEAFATVREASKRVFEMRHFDVQLLGGMVLDSNRIAEMRTGEGKTLTATLPAYLNALTGKGVHVITVNDYLARRDAENNRPLFEFLGLTVGINVAGLGQQAKKDAYNADITYGTNNEFGFDYLRDNMAFSPQERVQRPLHYALIDEVDSILIDEARTPLIISGAAEDSSELYIKINTLIPNLIRQDKEDSEEYVGEGDYSIDEKAKQVHFTERGQEKVENLLIERGMLAEGDSLYSAANISLLHHVNAALRAHTLFERDVDYIVQDGEVIIVDEHTGRTMPGRRWSEGLHQAVEAKEGVRIQNENQTLASITFQNYFRLYEKLAGMTGTADTEAFEFQHIYGLDTVVVPTNRPMVRKDMADLVYLTANEKYQAIIKDIKDCRERGQPVLVGTVSIEQSELLARLMVKEKIPHQVLNAKFHEKEAEIVAQAGRTGAVTIATNMAGRGTDIVLGGNWNMEIEALENPTAEQKAKIKADWQERHDAVVAAGGLHILGTERHESRRIDNQLRGRAGRQGDAGSSRFYLSMEDSLMRIFASDRVSGMMKKLGMEEGEAIEHPWVSRAIENAQRKVEARNFDIRKQLLEFDDVANDQRQVVYAQRNELMDAESIEDTIKNIQDDVISAVIDQYIPPQSVEELWDVPGLEQRLQQEFMLKLPIQEWLDKEDDLHEETLRERIITSWSDAYKAKEEMVGAPVLRQFEKAVMLQTLDGLWKEHLAAMDHLRQGIHLRGYAQKNPKQEYKRESFELFQQLLSTLKHDVISVLSKVQVQAQSDVEEMEARRREEDAKIQRDYQHAAAEALVGGDDGSDEMMAHTPMIRDGDKVGRNDPCPCGSGRKYKQCHGKLS.

ATP contacts are provided by residues Gln87, 105-109 (GEGKT), and Asp512. The interval 865–908 (GGDDGSDEMMAHTPMIRDGDKVGRNDPCPCGSGRKYKQCHGKLS) is disordered. A compositionally biased stretch (basic and acidic residues) spans 879 to 888 (MIRDGDKVGR). Zn(2+) contacts are provided by Cys892, Cys894, Cys903, and His904. Basic residues predominate over residues 898 to 908 (RKYKQCHGKLS).

It belongs to the SecA family. As to quaternary structure, monomer and homodimer. Part of the essential Sec protein translocation apparatus which comprises SecA, SecYEG and auxiliary proteins SecDF-YajC and YidC. Zn(2+) serves as cofactor.

The protein resides in the cell inner membrane. It is found in the cytoplasm. The catalysed reaction is ATP + H2O + cellular proteinSide 1 = ADP + phosphate + cellular proteinSide 2.. Functionally, part of the Sec protein translocase complex. Interacts with the SecYEG preprotein conducting channel. Has a central role in coupling the hydrolysis of ATP to the transfer of proteins into and across the cell membrane, serving both as a receptor for the preprotein-SecB complex and as an ATP-driven molecular motor driving the stepwise translocation of polypeptide chains across the membrane. In Shewanella sp. (strain MR-4), this protein is Protein translocase subunit SecA.